A 251-amino-acid chain; its full sequence is Pyrroloquinoline-quinone synthase (251 aa).

This sequence belongs to the PqqC family.

It catalyses the reaction 6-(2-amino-2-carboxyethyl)-7,8-dioxo-1,2,3,4,7,8-hexahydroquinoline-2,4-dicarboxylate + 3 O2 = pyrroloquinoline quinone + 2 H2O2 + 2 H2O + H(+). The protein operates within cofactor biosynthesis; pyrroloquinoline quinone biosynthesis. Its function is as follows. Ring cyclization and eight-electron oxidation of 3a-(2-amino-2-carboxyethyl)-4,5-dioxo-4,5,6,7,8,9-hexahydroquinoline-7,9-dicarboxylic-acid to PQQ. The chain is Pyrroloquinoline-quinone synthase from Pseudomonas putida (strain ATCC 47054 / DSM 6125 / CFBP 8728 / NCIMB 11950 / KT2440).